Consider the following 326-residue polypeptide: Putative nickel insertion protein (326 aa).

The protein belongs to the LarC family.

The sequence is that of Putative nickel insertion protein from Enterococcus faecalis (strain ATCC 700802 / V583).